Consider the following 217-residue polypeptide: Octanoyltransferase (217 aa).

A BPL/LPL catalytic domain is found at 35–214 (DEAGERIWLL…TLPAFLDKLR (180 aa)). Substrate is bound by residues 73 to 80 (RGGRYTYH), 145 to 147 (AIG), and 158 to 160 (GFS). The Acyl-thioester intermediate role is filled by Cys-176.

The protein belongs to the LipB family.

The protein localises to the cytoplasm. The enzyme catalyses octanoyl-[ACP] + L-lysyl-[protein] = N(6)-octanoyl-L-lysyl-[protein] + holo-[ACP] + H(+). The protein operates within protein modification; protein lipoylation via endogenous pathway; protein N(6)-(lipoyl)lysine from octanoyl-[acyl-carrier-protein]: step 1/2. In terms of biological role, catalyzes the transfer of endogenously produced octanoic acid from octanoyl-acyl-carrier-protein onto the lipoyl domains of lipoate-dependent enzymes. Lipoyl-ACP can also act as a substrate although octanoyl-ACP is likely to be the physiological substrate. The sequence is that of Octanoyltransferase from Sphingopyxis alaskensis (strain DSM 13593 / LMG 18877 / RB2256) (Sphingomonas alaskensis).